A 268-amino-acid polypeptide reads, in one-letter code: MADS-box protein FBP24 (268 aa).

Residues Met4–Pro64 enclose the MADS-box domain. In terms of domain architecture, K-box spans Arg88–Tyr178. The disordered stretch occupies residues Asn243–Asp268.

The protein localises to the nucleus. Its function is as follows. Probable transcription factor. This Petunia hybrida (Petunia) protein is MADS-box protein FBP24 (FBP24).